Consider the following 503-residue polypeptide: ATP-dependent RNA helicase dbp3 (503 aa).

Over residues 1-25 (MAKRVQHEGGDYRPQKRSKNERNGE) the composition is skewed to basic and acidic residues. Residues 1–35 (MAKRVQHEGGDYRPQKRSKNERNGEGSKVSPSAEA) form a disordered region. Positions 104–112 (SFSSPTPIQ) match the Q motif motif. A Helicase ATP-binding domain is found at 116 to 292 (WPLLFAGRDV…ATFMTSAVTV (177 aa)). ATP is bound at residue 129-136 (AETGSGKT). The short motif at 239–242 (DEAD) is the DEAD box element. The Helicase C-terminal domain maps to 307-472 (RIKQVVEVVK…DVPDALLKFG (166 aa)).

The protein belongs to the DEAD box helicase family. DDX5/DBP2 subfamily.

The protein resides in the nucleus. It localises to the nucleolus. It carries out the reaction ATP + H2O = ADP + phosphate + H(+). Functionally, ATP-dependent RNA helicase required for 60S ribosomal subunit synthesis. Involved in efficient pre-rRNA processing, predominantly at site A3, which is necessary for the normal formation of 25S and 5.8S rRNAs. This Neosartorya fischeri (strain ATCC 1020 / DSM 3700 / CBS 544.65 / FGSC A1164 / JCM 1740 / NRRL 181 / WB 181) (Aspergillus fischerianus) protein is ATP-dependent RNA helicase dbp3 (dbp3).